A 275-amino-acid polypeptide reads, in one-letter code: 5'-nucleotidase SurE (275 aa).

4 residues coordinate a divalent metal cation: aspartate 12, aspartate 13, serine 44, and asparagine 102.

Belongs to the SurE nucleotidase family. Requires a divalent metal cation as cofactor.

The protein resides in the cytoplasm. The enzyme catalyses a ribonucleoside 5'-phosphate + H2O = a ribonucleoside + phosphate. Nucleotidase that shows phosphatase activity on nucleoside 5'-monophosphates. The protein is 5'-nucleotidase SurE of Synechococcus sp. (strain RCC307).